A 583-amino-acid polypeptide reads, in one-letter code: Isocitrate dehydrogenase kinase/phosphatase (583 aa).

ATP-binding positions include 315 to 321 (APGIRGM) and K336. Residue D371 is part of the active site.

This sequence belongs to the AceK family.

The protein resides in the cytoplasm. It carries out the reaction L-seryl-[isocitrate dehydrogenase] + ATP = O-phospho-L-seryl-[isocitrate dehydrogenase] + ADP + H(+). Its function is as follows. Bifunctional enzyme which can phosphorylate or dephosphorylate isocitrate dehydrogenase (IDH) on a specific serine residue. This is a regulatory mechanism which enables bacteria to bypass the Krebs cycle via the glyoxylate shunt in response to the source of carbon. When bacteria are grown on glucose, IDH is fully active and unphosphorylated, but when grown on acetate or ethanol, the activity of IDH declines drastically concomitant with its phosphorylation. The protein is Isocitrate dehydrogenase kinase/phosphatase of Salmonella enteritidis PT4 (strain P125109).